We begin with the raw amino-acid sequence, 249 residues long: Cytochrome c oxidase subunit 2 (249 aa).

The N-terminal stretch at 1-13 is a signal peptide; the sequence is MLNLFQIMNMINN. The Mitochondrial intermembrane portion of the chain corresponds to 14-40; sequence DVPTPYGFYFQDSATPNQEGILELHDN. A helical membrane pass occupies residues 41–62; that stretch reads IMFYLVVILGLVSWMLFTIVRT. Residues 63–80 lie on the Mitochondrial matrix side of the membrane; sequence YSRNPMAYKYIKHGQTIE. The chain crosses the membrane as a helical span at residues 81–105; the sequence is IIWKIFPAVILLTIAFPSFILLYLC. At 106–249 the chain is on the mitochondrial intermembrane side; sequence DEVISPAMTI…PKFLEWLNEQ (144 aa). Cu cation contacts are provided by His-184, Cys-219, Glu-221, Cys-223, His-227, and Met-230. Position 221 (Glu-221) interacts with Mg(2+).

Belongs to the cytochrome c oxidase subunit 2 family. Component of the cytochrome c oxidase (complex IV, CIV), a multisubunit enzyme composed of a catalytic core of 3 subunits and several supernumerary subunits. The complex exists as a monomer or a dimer and forms supercomplexes (SCs) in the inner mitochondrial membrane with ubiquinol-cytochrome c oxidoreductase (cytochrome b-c1 complex, complex III, CIII). Cu cation serves as cofactor. The signal sequence of COX2 is processed by IMP1.

The protein resides in the mitochondrion inner membrane. The enzyme catalyses 4 Fe(II)-[cytochrome c] + O2 + 8 H(+)(in) = 4 Fe(III)-[cytochrome c] + 2 H2O + 4 H(+)(out). In terms of biological role, component of the cytochrome c oxidase, the last enzyme in the mitochondrial electron transport chain which drives oxidative phosphorylation. The respiratory chain contains 3 multisubunit complexes succinate dehydrogenase (complex II, CII), ubiquinol-cytochrome c oxidoreductase (cytochrome b-c1 complex, complex III, CIII) and cytochrome c oxidase (complex IV, CIV), that cooperate to transfer electrons derived from NADH and succinate to molecular oxygen, creating an electrochemical gradient over the inner membrane that drives transmembrane transport and the ATP synthase. Cytochrome c oxidase is the component of the respiratory chain that catalyzes the reduction of oxygen to water. Electrons originating from reduced cytochrome c in the intermembrane space (IMS) are transferred via the dinuclear copper A center (CU(A)) of subunit 2 and heme A of subunit 1 to the active site in subunit 1, a binuclear center (BNC) formed by heme A3 and copper B (CU(B)). The BNC reduces molecular oxygen to 2 water molecules using 4 electrons from cytochrome c in the IMS and 4 protons from the mitochondrial matrix. The sequence is that of Cytochrome c oxidase subunit 2 (COX2) from Maudiozyma exigua (Yeast).